We begin with the raw amino-acid sequence, 199 residues long: NADH-quinone oxidoreductase subunit C (199 aa).

It belongs to the complex I 30 kDa subunit family. As to quaternary structure, NDH-1 is composed of 14 different subunits. Subunits NuoB, C, D, E, F, and G constitute the peripheral sector of the complex.

It is found in the cell inner membrane. It catalyses the reaction a quinone + NADH + 5 H(+)(in) = a quinol + NAD(+) + 4 H(+)(out). Functionally, NDH-1 shuttles electrons from NADH, via FMN and iron-sulfur (Fe-S) centers, to quinones in the respiratory chain. The immediate electron acceptor for the enzyme in this species is believed to be ubiquinone. Couples the redox reaction to proton translocation (for every two electrons transferred, four hydrogen ions are translocated across the cytoplasmic membrane), and thus conserves the redox energy in a proton gradient. The chain is NADH-quinone oxidoreductase subunit C from Roseobacter denitrificans (strain ATCC 33942 / OCh 114) (Erythrobacter sp. (strain OCh 114)).